The following is a 1281-amino-acid chain: Dynactin subunit 1 (1281 aa).

The segment at Met-1–Pro-26 is disordered. Positions Ser-10 to Ala-22 are enriched in polar residues. One can recognise a CAP-Gly domain in the interval Gly-48–Arg-90. The interval Gly-100–Arg-221 is disordered. Polar residues predominate over residues Asp-102 to Ser-114. Residues Thr-108, Thr-145, Thr-146, and Thr-147 each carry the phosphothreonine modification. Positions Ser-129–Pro-152 are enriched in basic residues. The segment covering Ala-161–Gly-205 has biased composition (low complexity). Ser-179 is modified (phosphoserine; by PLK1). The residue at position 212 (Ser-212) is a Phosphoserine; by CDK1. Coiled coils occupy residues Ser-214–Gln-547, Leu-943–Arg-1049, and Ser-1185–Val-1214. The interval Glu-911–Ser-1281 is interaction with HPS6.

The protein belongs to the dynactin 150 kDa subunit family. In terms of assembly, monomer and homodimer. Subunit of dynactin, a multiprotein complex part of a tripartite complex with dynein and a adapter, such as BICDL1, BICD2 or HOOK3. The dynactin complex is built around ACTR1A/ACTB filament and consists of an actin-related filament composed of a shoulder domain, a pointed end and a barbed end. Its length is defined by its flexible shoulder domain. The soulder is composed of 2 DCTN1 subunits, 4 DCTN2 and 2 DCTN3. DCTN1/p150(glued) binds directly to microtubules and to cytoplasmic dynein. The 4 DCNT2 (via N-terminus) bind the ACTR1A filament and act as molecular rulers to determine the length. The pointed end is important for binding dynein-dynactin cargo adapters. Consists of 4 subunits: ACTR10, DCNT4, DCTN5 and DCTN6. The barbed end is composed of a CAPZA1:CAPZB heterodimers, which binds ACTR1A/ACTB filament and dynactin and stabilizes dynactin. Interacts with the C-terminus of MAPRE1, MAPRE2 and MAPRE3. Interacts with FBXL5. Interacts with ECPAS. Interacts with CLIP1. Interacts with CLN3 and DYNAP. Interacts with MISP; this interaction regulates its distribution at the cell cortex. Interacts with CEP131. Interacts with CEP126. Interacts with dynein intermediate chain and dynein heavy chain. Interacts with PLK1 (via POLO-box domain). Interacts with TBCB and PARD6A. Binds preferentially to tyrosinated microtubules than to detyrosinated microtubules. Interacts with KIF3A. Interacts with HPS6. Interacts with SNX6. Interacts with BICD2. Interacts with DST (isoform 1). Identified in a complex with MREG and RILP. Interacts with BCCIP. Interacts with DCDC1. Interacts with AKNA. Interacts with DYNC1I2. Interacts with RUFY3 and RUFY4. Ubiquitinated by a SCF complex containing FBXL5, leading to its degradation by the proteasome. In terms of processing, phosphorylation by SLK at Thr-145, Thr-146 and Thr-147 targets DCTN1 to the centrosome. It is uncertain if SLK phosphorylates all three threonines or one or two of them. PLK1-mediated phosphorylation at Ser-179 is essential for its localization in the nuclear envelope and promotes its dissociation from microtubules during early mitosis and positively regulates nuclear envelope breakdown during prophase.

It localises to the cytoplasm. It is found in the cytoskeleton. The protein resides in the microtubule organizing center. The protein localises to the centrosome. Its subcellular location is the centriole. It localises to the spindle. It is found in the nucleus envelope. The protein resides in the cell cortex. Part of the dynactin complex that activates the molecular motor dynein for ultra-processive transport along microtubules. Plays a key role in dynein-mediated retrograde transport of vesicles and organelles along microtubules by recruiting and tethering dynein to microtubules. Binds to both dynein and microtubules providing a link between specific cargos, microtubules and dynein. Essential for targeting dynein to microtubule plus ends, recruiting dynein to membranous cargos and enhancing dynein processivity (the ability to move along a microtubule for a long distance without falling off the track). Can also act as a brake to slow the dynein motor during motility along the microtubule. Can regulate microtubule stability by promoting microtubule formation, nucleation and polymerization and by inhibiting microtubule catastrophe in neurons. Inhibits microtubule catastrophe by binding both to microtubules and to tubulin, leading to enhanced microtubule stability along the axon. Plays a role in metaphase spindle orientation. Plays a role in centriole cohesion and subdistal appendage organization and function. Its recruitment to the centriole in a KIF3A-dependent manner is essential for the maintenance of centriole cohesion and the formation of subdistal appendage. Also required for microtubule anchoring at the mother centriole. Plays a role in primary cilia formation. The protein is Dynactin subunit 1 (Dctn1) of Mus musculus (Mouse).